Here is a 271-residue protein sequence, read N- to C-terminus: Collectin-11 (271 aa).

A signal peptide spans 1–25; the sequence is MVGEKLVAYMLVSVLGLALLRSVFG. Residues 44-103 enclose the Collagen-like domain; that stretch reads GEAGEKGEKGAPGRPGRVGPTGEQGPPGDKGQKGSPGRYGKMGPTGPKGLKGDMGDPGPK. The segment at 46–112 is disordered; sequence AGEKGEKGAP…KGPNGEPGVP (67 aa). The stretch at 124 to 148 forms a coiled coil; the sequence is EMDIQVVQLTNELKFIKNAVAGIKE. The 117-residue stretch at 149-265 folds into the C-type lectin domain; sequence TDSKVYLLVK…CQLTMYFVCE (117 aa). 2 cysteine pairs are disulfide-bonded: Cys-170–Cys-264 and Cys-242–Cys-256. Arg-200 contributes to the a carbohydrate binding site. Residues Asp-207, Glu-211, Glu-232, Asn-234, Asn-235, Asp-238, Glu-240, and Asp-241 each contribute to the Ca(2+) site. Glu-240 provides a ligand contact to a carbohydrate. Residues Glu-244 and 252–254 contribute to the a carbohydrate site; that span reads IDV. Asp-253 contributes to the Ca(2+) binding site.

Belongs to the COLEC10/COLEC11 family. As to quaternary structure, homotrimer; disulfide-linked. Interacts with MASP1; probably triggers the lectin pathway of complement.

Its subcellular location is the secreted. Functionally, lectin that plays a role in innate immunity, apoptosis and embryogenesis. Calcium-dependent lectin that binds self and non-self glycoproteins presenting high mannose oligosaccharides with at least one terminal alpha-1,2-linked mannose epitope. Primarily recognizes the terminal disaccharide of the glycan. Also recognizes a subset of fucosylated glycans and lipopolysaccharides. Plays a role in innate immunity through its ability to bind non-self sugars presented by microorganisms and to activate the complement through the recruitment of MAPS1. Also plays a role in apoptosis through its ability to bind in a calcium-independent manner the DNA present at the surface of apoptotic cells and to activate the complement in response to this binding. Finally, plays a role in development, probably serving as a guidance cue during the migration of neural crest cells and other cell types during embryogenesis. In Danio rerio (Zebrafish), this protein is Collectin-11 (colec11).